The sequence spans 431 residues: DNA polymerase delta subunit 3 (431 aa).

Positions 64-80 are necessary for function, possibly resulting from its inability to interact with PolD2; the sequence is QGSDSGEDLYSVVLESR. Residues 128–431 form a disordered region; sequence PGAGKIVPSA…AGIMNFFSKK (304 aa). Over residues 156–171 the composition is skewed to low complexity; the sequence is SKSAVKLEPSKSSLKS. Basic and acidic residues-rich tracts occupy residues 172–200 and 252–271; these read EPAK…EQAS and SPPE…NKKE. A compositionally biased stretch (low complexity) spans 278–290; sequence PSPTKKPTTANTS. Positions 294-307 are enriched in acidic residues; the sequence is FDEESAESSDEEEK. Basic and acidic residues-rich tracts occupy residues 308–328 and 343–362; these read LDML…EKAS and QPPK…KMDT. The span at 387-411 shows a compositional bias: low complexity; that stretch reads PANKKVSPKAAAPVNKKKSPPSAAK.

As to quaternary structure, component of both the DNA polymerase delta and DNA polymerase zeta complexes. The DNA polymerase delta complex consists of three subunits: the catalytic subunit PolD1 and two accessory subunits PolD2/Pol31 and PolD3/Pol32. Within the delta complex, interacts with both PolD1 and PolD2. Component of the DNA polymerase zeta complex consisting of four subunits: the catalytic subunit PolZ1 and three accessory subunits PolZ2/Rev7, PolD2/Pol31 and PolD3/Pol32. In terms of tissue distribution, expressed in ovaries (at the protein level). Expressed in ovaries.

It is found in the nucleus. The protein resides in the nucleoplasm. Its function is as follows. Accessory component of the DNA polymerase delta complex and possibly the DNA polymerase zeta complex. As a component of the delta complex, participates in high fidelity genome replication, including lagging strand synthesis, DNA recombination and repair. Required to recruit the DNA polymerase delta complex to the nucleus of rapidly dividing embryonic cells, and as a consequence is essential for genome replication during the earliest cell cycles. Increases the efficiency and processivity of DNA synthesis of the DNA polymerases during mitotic DNA replication and repair. During development this function is essential for preventing replication stress that results in the formation of chromosomal fragile sites (CFS) such as chromosomal breaks. Ensures genomic stability by promoting several types of DNA repair mechanisms including repairing broken dicentric chromosomes through homolog-dependent break-induced replication (BIR). During homologous recombination (HR) repair, required for maintaining the processivity of the delta complex during break-induced replication; a form of HR that requires extensive DNA synthesis such as the repair of large gaps. Able to suppress position effect variegation and may therefore have a role in the induction of chromatin state changes that likely include its activities in DNA replication and repair. This is DNA polymerase delta subunit 3 from Drosophila melanogaster (Fruit fly).